The sequence spans 396 residues: Anhydro-N-acetylmuramic acid kinase (396 aa).

ATP is bound at residue 21-28 (GTSADGID).

It belongs to the anhydro-N-acetylmuramic acid kinase family.

The catalysed reaction is 1,6-anhydro-N-acetyl-beta-muramate + ATP + H2O = N-acetyl-D-muramate 6-phosphate + ADP + H(+). The protein operates within amino-sugar metabolism; 1,6-anhydro-N-acetylmuramate degradation. It functions in the pathway cell wall biogenesis; peptidoglycan recycling. Catalyzes the specific phosphorylation of 1,6-anhydro-N-acetylmuramic acid (anhMurNAc) with the simultaneous cleavage of the 1,6-anhydro ring, generating MurNAc-6-P. Is required for the utilization of anhMurNAc either imported from the medium or derived from its own cell wall murein, and thus plays a role in cell wall recycling. The protein is Anhydro-N-acetylmuramic acid kinase of Caldanaerobacter subterraneus subsp. tengcongensis (strain DSM 15242 / JCM 11007 / NBRC 100824 / MB4) (Thermoanaerobacter tengcongensis).